The sequence spans 77 residues: Translation initiation factor IF-1, chloroplastic (77 aa).

Residues 1 to 72 (MKKQNLIEME…TKGRITYRLR (72 aa)) form the S1-like domain.

The protein belongs to the IF-1 family. As to quaternary structure, component of the 30S ribosomal translation pre-initiation complex which assembles on the 30S ribosome in the order IF-2 and IF-3, IF-1 and N-formylmethionyl-tRNA(fMet); mRNA recruitment can occur at any time during PIC assembly.

It localises to the plastid. Its subcellular location is the chloroplast. Functionally, one of the essential components for the initiation of protein synthesis. Stabilizes the binding of IF-2 and IF-3 on the 30S subunit to which N-formylmethionyl-tRNA(fMet) subsequently binds. Helps modulate mRNA selection, yielding the 30S pre-initiation complex (PIC). Upon addition of the 50S ribosomal subunit IF-1, IF-2 and IF-3 are released leaving the mature 70S translation initiation complex. This Zygnema circumcarinatum (Green alga) protein is Translation initiation factor IF-1, chloroplastic.